Here is a 399-residue protein sequence, read N- to C-terminus: S-adenosylmethionine synthase (399 aa).

ATP is bound at residue H16. D18 provides a ligand contact to Mg(2+). Residue E44 participates in K(+) binding. Residues E57 and Q100 each contribute to the L-methionine site. Residues Q100–E110 form a flexible loop region. ATP contacts are provided by residues D177 to K179, R244 to F245, D253, R259 to K260, A276, and K280. D253 serves as a coordination point for L-methionine. K284 is an L-methionine binding site.

It belongs to the AdoMet synthase family. Homotetramer; dimer of dimers. Mg(2+) is required as a cofactor. The cofactor is K(+).

It is found in the cytoplasm. The catalysed reaction is L-methionine + ATP + H2O = S-adenosyl-L-methionine + phosphate + diphosphate. The protein operates within amino-acid biosynthesis; S-adenosyl-L-methionine biosynthesis; S-adenosyl-L-methionine from L-methionine: step 1/1. Catalyzes the formation of S-adenosylmethionine (AdoMet) from methionine and ATP. The overall synthetic reaction is composed of two sequential steps, AdoMet formation and the subsequent tripolyphosphate hydrolysis which occurs prior to release of AdoMet from the enzyme. The protein is S-adenosylmethionine synthase of Lactococcus lactis subsp. lactis (strain IL1403) (Streptococcus lactis).